A 714-amino-acid chain; its full sequence is Phosphate acetyltransferase (714 aa).

The interval 390–714 is phosphate acetyltransferase; that stretch reads AFRYQLTELA…TAIQASQQQQ (325 aa).

In the N-terminal section; belongs to the CobB/CobQ family. It in the C-terminal section; belongs to the phosphate acetyltransferase and butyryltransferase family. Homohexamer.

Its subcellular location is the cytoplasm. It carries out the reaction acetyl-CoA + phosphate = acetyl phosphate + CoA. It catalyses the reaction propanoyl-CoA + phosphate = propanoyl phosphate + CoA. It functions in the pathway metabolic intermediate biosynthesis; acetyl-CoA biosynthesis; acetyl-CoA from acetate: step 2/2. Allosterically inhibited by NADH. Its function is as follows. Involved in acetate metabolism. Catalyzes the reversible interconversion of acetyl-CoA and acetyl phosphate. The direction of the overall reaction changes depending on growth conditions. Required for acetate recapture but not for acetate excretion when this organism is grown on ethanolamine (EA); is unable to complement an eutD deletion during growth on EA. Works with proprionate kinase PduW to capture exogenous propionate and regenerate propionyl-CoA during degradation of propionate and 1,2-propanediol (1,2-PD). This chain is Phosphate acetyltransferase (pta), found in Salmonella typhimurium (strain LT2 / SGSC1412 / ATCC 700720).